The sequence spans 287 residues: Hydroxysteroid 11-beta-dehydrogenase 1-like protein (287 aa).

A signal peptide spans M1–A15. NADP(+)-binding positions include G36–T62, D87–M88, and N114–L116. S165 contacts substrate. Y178 functions as the Proton acceptor in the catalytic mechanism. Residues Y178–K182 and G211–S217 each bind NADP(+). The N-linked (GlcNAc...) asparagine glycan is linked to N280.

This sequence belongs to the short-chain dehydrogenases/reductases (SDR) family.

The protein resides in the secreted. It carries out the reaction cortisone + NADPH + H(+) = cortisol + NADP(+). In terms of biological role, unidirectional NADP(+)-dependent cortisol dehydrogenase (in vitro). This chain is Hydroxysteroid 11-beta-dehydrogenase 1-like protein (HSD11B1L), found in Bos taurus (Bovine).